Reading from the N-terminus, the 409-residue chain is tRNA(Met) cytidine acetate ligase (409 aa).

ATP is bound by residues Val7–His20, Gly102, Asn169, and Arg194.

Belongs to the TmcAL family.

Its subcellular location is the cytoplasm. The catalysed reaction is cytidine(34) in elongator tRNA(Met) + acetate + ATP = N(4)-acetylcytidine(34) in elongator tRNA(Met) + AMP + diphosphate. In terms of biological role, catalyzes the formation of N(4)-acetylcytidine (ac(4)C) at the wobble position of elongator tRNA(Met), using acetate and ATP as substrates. First activates an acetate ion to form acetyladenylate (Ac-AMP) and then transfers the acetyl group to tRNA to form ac(4)C34. This Clostridium botulinum (strain ATCC 19397 / Type A) protein is tRNA(Met) cytidine acetate ligase.